The primary structure comprises 77 residues: UPF0291 protein RBAM_017680 (77 aa).

Residues 55-77 (IDPEGNDVTPEKLKREQQKNNLH) form a disordered region. The segment covering 63–77 (TPEKLKREQQKNNLH) has biased composition (basic and acidic residues).

Belongs to the UPF0291 family.

Its subcellular location is the cytoplasm. In Bacillus velezensis (strain DSM 23117 / BGSC 10A6 / LMG 26770 / FZB42) (Bacillus amyloliquefaciens subsp. plantarum), this protein is UPF0291 protein RBAM_017680.